The following is a 157-amino-acid chain: Cyclic pyranopterin monophosphate synthase (157 aa).

Residues M74 to H76 and M111 to E112 contribute to the substrate site. D126 is an active-site residue.

Belongs to the MoaC family. Homohexamer; trimer of dimers.

It carries out the reaction (8S)-3',8-cyclo-7,8-dihydroguanosine 5'-triphosphate = cyclic pyranopterin phosphate + diphosphate. Its pathway is cofactor biosynthesis; molybdopterin biosynthesis. Its function is as follows. Catalyzes the conversion of (8S)-3',8-cyclo-7,8-dihydroguanosine 5'-triphosphate to cyclic pyranopterin monophosphate (cPMP). The protein is Cyclic pyranopterin monophosphate synthase of Carboxydothermus hydrogenoformans (strain ATCC BAA-161 / DSM 6008 / Z-2901).